The following is a 328-amino-acid chain: Malate dehydrogenase (328 aa).

NAD(+) is bound at residue 11–17 (GAAGQIG). Substrate-binding residues include Arg-94 and Arg-100. Residues Asn-107, Gln-114, and 131 to 133 (VGN) contribute to the NAD(+) site. Substrate contacts are provided by Asn-133 and Arg-164. Residue His-189 is the Proton acceptor of the active site.

This sequence belongs to the LDH/MDH superfamily. MDH type 2 family.

It catalyses the reaction (S)-malate + NAD(+) = oxaloacetate + NADH + H(+). Its function is as follows. Catalyzes the reversible oxidation of malate to oxaloacetate. The protein is Malate dehydrogenase of Xanthomonas oryzae pv. oryzae (strain PXO99A).